The primary structure comprises 285 residues: NADPH-dependent 7-cyano-7-deazaguanine reductase (285 aa).

91–93 (IES) is a binding site for substrate. NADPH is bound at residue 93 to 94 (SK). The active-site Thioimide intermediate is the C193. The active-site Proton donor is the D200. Position 232 to 233 (232 to 233 (HE)) interacts with substrate. NADPH is bound at residue 261-262 (RG).

The protein belongs to the GTP cyclohydrolase I family. QueF type 2 subfamily. In terms of assembly, homodimer.

Its subcellular location is the cytoplasm. It catalyses the reaction 7-aminomethyl-7-carbaguanine + 2 NADP(+) = 7-cyano-7-deazaguanine + 2 NADPH + 3 H(+). It participates in tRNA modification; tRNA-queuosine biosynthesis. Functionally, catalyzes the NADPH-dependent reduction of 7-cyano-7-deazaguanine (preQ0) to 7-aminomethyl-7-deazaguanine (preQ1). The protein is NADPH-dependent 7-cyano-7-deazaguanine reductase of Shewanella baltica (strain OS223).